A 185-amino-acid polypeptide reads, in one-letter code: MTTLSIFHQNQPEQAQTVVTDPDTIRNKLSAHGVHFDRWATRDLPADATQEEILEAYADEVARLKQDWGFQTADVVSLTADHPQKDAFRQKFLDEHTHSEDEVRFFVRGQGLFYLHFGDQVYALLCEKNDLISVPDGTRHWFDMGPEPEFTCIRLFSNPEGWVASFTGEDIASRLPRYESLAGGA.

Residues His-96, His-98, Glu-102, and His-140 each contribute to the Fe(2+) site. The Ni(2+) site is built by His-96, His-98, Glu-102, and His-140.

The protein belongs to the acireductone dioxygenase (ARD) family. As to quaternary structure, monomer. Fe(2+) serves as cofactor. The cofactor is Ni(2+).

The enzyme catalyses 1,2-dihydroxy-5-(methylsulfanyl)pent-1-en-3-one + O2 = 3-(methylsulfanyl)propanoate + CO + formate + 2 H(+). It catalyses the reaction 1,2-dihydroxy-5-(methylsulfanyl)pent-1-en-3-one + O2 = 4-methylsulfanyl-2-oxobutanoate + formate + 2 H(+). It functions in the pathway amino-acid biosynthesis; L-methionine biosynthesis via salvage pathway; L-methionine from S-methyl-5-thio-alpha-D-ribose 1-phosphate: step 5/6. In terms of biological role, catalyzes 2 different reactions between oxygen and the acireductone 1,2-dihydroxy-3-keto-5-methylthiopentene (DHK-MTPene) depending upon the metal bound in the active site. Fe-containing acireductone dioxygenase (Fe-ARD) produces formate and 2-keto-4-methylthiobutyrate (KMTB), the alpha-ketoacid precursor of methionine in the methionine recycle pathway. Ni-containing acireductone dioxygenase (Ni-ARD) produces methylthiopropionate, carbon monoxide and formate, and does not lie on the methionine recycle pathway. In Marinobacter nauticus (strain ATCC 700491 / DSM 11845 / VT8) (Marinobacter aquaeolei), this protein is Acireductone dioxygenase.